Here is a 346-residue protein sequence, read N- to C-terminus: G-protein coupled receptor 42 (346 aa).

Over 1–19 (MDTGPDQSYFSGNHWFVFS) the chain is Extracellular. Residues 20–40 (VYLLTFLVGLPLNLLALVVFV) traverse the membrane as a helical segment. Residues 41–47 (GKLRCRP) lie on the Cytoplasmic side of the membrane. A helical transmembrane segment spans residues 48-68 (VAVDVLLLNLTASDLLLLLFL). Topologically, residues 69-90 (PFRMVEAANGMHWPLPFILCPL) are extracellular. A helical membrane pass occupies residues 91 to 111 (SGFIFFTTIYLTALFLAAVSI). Residues 112-132 (ERFLSVAHPLWYKTRPRLGQA) are Cytoplasmic-facing. Residues 133–153 (GLVSVACWLLASAHCSVVYVI) traverse the membrane as a helical segment. Topologically, residues 154–178 (EFSGDISHSQGTNGTCYLEFRKDQL) are extracellular. Asn-166 is a glycosylation site (N-linked (GlcNAc...) asparagine). Residues 179–199 (AILLPVRLEMAVVLFVVPLII) form a helical membrane-spanning segment. At 200–222 (TSYCYSRLVWILGRGGSHRRQRR) the chain is on the cytoplasmic side. Residues 223 to 243 (VAGLVAATLLNFLVCFGPYNV) form a helical membrane-spanning segment. Residues 244–258 (SHVVGYICGESPVWR) are Extracellular-facing. The helical transmembrane segment at 259–279 (IYVTLLSTLNSCVDPFVYYFS) threads the bilayer. Topologically, residues 280-346 (SSGFQADFHE…TGGQVACAEN (67 aa)) are cytoplasmic. Over residues 307–330 (MELKEQKGGEEQRADRPAERKTSE) the composition is skewed to basic and acidic residues. The segment at 307–346 (MELKEQKGGEEQRADRPAERKTSEHSQGCGTGGQVACAEN) is disordered.

Belongs to the G-protein coupled receptor 1 family.

The protein resides in the cell membrane. In terms of biological role, g protein-coupled receptor that is activated by short chain fatty acids (SCFAs), such as propionate. Hence may play a role in the regulation of whole-body energy homeostasis and/or in intestinal immunity. In Homo sapiens (Human), this protein is G-protein coupled receptor 42 (GPR42).